The sequence spans 373 residues: 3-isopropylmalate dehydrogenase gloI (373 aa).

3 residues coordinate substrate: serine 92, arginine 98, and arginine 108. The Mg(2+) site is built by aspartate 228, aspartate 253, and aspartate 257. NADP(+) contacts are provided by residues 294-300 (HGSAPDI) and asparagine 307.

This sequence belongs to the isocitrate and isopropylmalate dehydrogenases family. In terms of assembly, homodimer. Mg(2+) serves as cofactor. The cofactor is Mn(2+).

The enzyme catalyses (2R,3S)-3-isopropylmalate + NAD(+) = 4-methyl-2-oxopentanoate + CO2 + NADH. It participates in mycotoxin biosynthesis. Functionally, 3-isopropylmalate dehydrogenase; part of the gene cluster that mediates the biosynthesis of pneumocandins, lipohexapeptides of the echinocandin family that prevent fungal cell wall formation by non-competitive inhibition of beta-1,3-glucan synthase. The 10,12-dimethylmyristoyl side chain is synthesized by the reducing polyketide synthase gloL/GLPKS4. The thioesterase gloN/GLHYD exclusively interacts with gloL/GLPKS4 to maintain turnover of the polyketide side chain. The 10R,12S-dimethylmyristic acid is then transferred to the first thiolation domain of the nonribosomal peptide synthetase gloA/GLNRPS4 by the acyl-AMP ligase gloD/GLligase, followed by its acylation to L-ornithine to trigger elongation of the cyclic hexapeptide. L-ornithine, 4R-hydroxyl-L-proline (generated from L-proline by the dioxygenase gloF/GLOXY2), 3S-hydroxyl-L-homotyrosine (generated by gloG/GLHtyB, gloH/GLHtyA, gloI/GLHtyC, gloJ/GLHtyD and hydroxylated at C-3 by the dioxygenase gloM/GLOXY1), 3R-hydroxyl-L-glutamine (generated from L-glutamine probably by the dioxygenase gloE/GLOXY3) and 3S-hydroxyl-L-proline (generated from L-proline by the dioxygenase gloF/GLOXY2 to yield pneumocandin B0), or 3S-hydroxyl-4S-methyl-L-proline (generated from L-leucine by the dioxygenase gloC/GLOXY4 to yield pneumocandin A0) are sequentially added to the growing chain. The last C domain of gloA/GLNRPS4 is proposed to be responsible for cyclization by condensation to form the peptide bond between L-ornithine and 3S-hydroxyl-4S-methyl-L-proline (for pneumocandin A0) or 3S-hydroxyl-L-proline (for pneumocandin B0). Finally, the subsequent C-4 hydroxylation of 3S-hydroxyl-L-homotyrosine and L-ornithine dihydroxylation at C-4 and C-5 are performed by the cytochrome P450 monooxygenases gloP/GLP450-1 and gloO/GLP450-2, respectively. This is 3-isopropylmalate dehydrogenase gloI from Glarea lozoyensis (strain ATCC 20868 / MF5171).